The primary structure comprises 238 residues: D/L-lactic acid transporter (238 aa).

The next 2 helical transmembrane spans lie at 2–22 (VHQLIAEFMGTALMIIFGVGV) and 39–59 (IFAITTWGFGISVALFIFGNV). Residues 62 to 64 (NPA) carry the NPA 1 motif. The next 3 membrane-spanning stretches (helical) occupy residues 80 to 100 (FIPYSVAEVLGGVVGSVIVWI), 135 to 155 (FFVELFDTFIFISGILAISEI), and 158 to 178 (PGIVPIGVGLLVWAIGMGLGG). The NPA 2 motif lies at 185-187 (NLA). Residues 211 to 231 (YGIIVPGIAPFVGAAIAAWFM) traverse the membrane as a helical segment.

This sequence belongs to the MIP/aquaporin (TC 1.A.8) family.

It localises to the cell membrane. Transporter that facilitates the transmembrane diffusion of D/L-lactic acid. Is involved in the cellular racemization of lactate and lactate metabolism. The transported molecule is indeed lactic acid and not the lactate anion, in agreement with the assumption that, with very few exceptions, MIPs (major intrinsic proteins) only facilitate the transport of uncharged solutes. Also facilitates urea and H(2)O(2) diffusion across membranes, but is not permeable to water, glycerol and dihydroxyacetone. The polypeptide is D/L-lactic acid transporter (Lactiplantibacillus plantarum (strain ATCC BAA-793 / NCIMB 8826 / WCFS1) (Lactobacillus plantarum)).